The sequence spans 447 residues: UDP-glycosyltransferase 79B9 (447 aa).

UDP-alpha-D-glucose-binding positions include S260, 319–321 (VQQ), 336–344 (HCGFGSMWE), and 358–361 (LCDQ).

Belongs to the UDP-glycosyltransferase family.

The protein is UDP-glycosyltransferase 79B9 (UGT79B9) of Arabidopsis thaliana (Mouse-ear cress).